The sequence spans 470 residues: 6-phospho-beta-galactosidase (470 aa).

D-galactose 6-phosphate is bound by residues Gln-19, His-116, Asn-159, Glu-160, and Asn-297. Glu-160 acts as the Proton donor in catalysis. The active-site Nucleophile is the Glu-375. Ser-430, Trp-431, Lys-437, and Tyr-439 together coordinate D-galactose 6-phosphate.

It belongs to the glycosyl hydrolase 1 family.

It catalyses the reaction a 6-phospho-beta-D-galactoside + H2O = D-galactose 6-phosphate + an alcohol. It participates in carbohydrate metabolism; lactose degradation; D-galactose 6-phosphate and beta-D-glucose from lactose 6-phosphate: step 1/1. The sequence is that of 6-phospho-beta-galactosidase from Staphylococcus aureus (strain COL).